The sequence spans 630 residues: 1-deoxy-D-xylulose-5-phosphate synthase (630 aa).

Residues H87 and 128–130 (GHS) contribute to the thiamine diphosphate site. D159 is a binding site for Mg(2+). Thiamine diphosphate is bound by residues 160-161 (GA), N188, F295, and E377. Mg(2+) is bound at residue N188.

This sequence belongs to the transketolase family. DXPS subfamily. Homodimer. Mg(2+) serves as cofactor. It depends on thiamine diphosphate as a cofactor.

It carries out the reaction D-glyceraldehyde 3-phosphate + pyruvate + H(+) = 1-deoxy-D-xylulose 5-phosphate + CO2. The protein operates within metabolic intermediate biosynthesis; 1-deoxy-D-xylulose 5-phosphate biosynthesis; 1-deoxy-D-xylulose 5-phosphate from D-glyceraldehyde 3-phosphate and pyruvate: step 1/1. Its function is as follows. Catalyzes the acyloin condensation reaction between C atoms 2 and 3 of pyruvate and glyceraldehyde 3-phosphate to yield 1-deoxy-D-xylulose-5-phosphate (DXP). In Pseudomonas savastanoi pv. phaseolicola (strain 1448A / Race 6) (Pseudomonas syringae pv. phaseolicola (strain 1448A / Race 6)), this protein is 1-deoxy-D-xylulose-5-phosphate synthase.